The primary structure comprises 86 residues: Protein Vpu (86 aa).

The Extracellular segment spans residues 1–8 (MDIVQQVG). Residues 9 to 29 (LLVVLIIELVIVIVIWVKVYK) traverse the membrane as a helical segment. The Cytoplasmic segment spans residues 30–86 (LCKEDRRQKKIDRLIARIRERAEDSGNESDGDTEELQDLITEGDNLMHIGIRDNRNN). 2 positions are modified to phosphoserine; by host CK2: serine 54 and serine 58.

Belongs to the HIV-1 VPU protein family. In terms of assembly, homopentamer. Interacts with host CD4 and BRTC; these interactions induce proteasomal degradation of CD4. Interacts with host BST2; this interaction leads to the degradation of host BST2. Interacts with host FBXW11. Interacts with host AP1M1; this interaction plays a role in the mistrafficking and subsequent degradation of host BST2. Interacts with host RANBP2; this interaction allows Vpu to down-regulate host BLM sumoylation. Forms pentamers or hexamers. Interacts with host CD4 and BRTC; these interactions induce proteasomal degradation of CD4. Interacts with host BST2; this interaction leads to the degradation of host BST2. Interacts with host FBXW11. Interacts with host AP1M1; this interaction plays a role in the mistrafficking and subsequent degradation of host BST2. Phosphorylated by host CK2. This phosphorylation is necessary for interaction with human BTRC and degradation of CD4.

The protein localises to the host membrane. Its activity is regulated as follows. Ion channel activity is inhibited by hexamethylene amiloride in vitro. Functionally, enhances virion budding by targeting host CD4 and Tetherin/BST2 to proteasome degradation. Degradation of CD4 prevents any unwanted premature interactions between viral Env and its host receptor CD4 in the endoplasmic reticulum. Degradation of antiretroviral protein Tetherin/BST2 is important for virion budding, as BST2 tethers new viral particles to the host cell membrane. Mechanistically, Vpu bridges either CD4 or BST2 to BTRC, a substrate recognition subunit of the Skp1/Cullin/F-box protein E3 ubiquitin ligase, induces their ubiquitination and subsequent proteasomal degradation. The alteration of the E3 ligase specificity by Vpu seems to promote the degradation of host IKBKB, leading to NF-kappa-B down-regulation and subsequent apoptosis. Acts as a viroporin that forms an oligomeric ion channel in membranes. Modulates the host DNA repair mechanisms to promote degradation of nuclear viral cDNA in cells that are already productively infected in order to suppress immune sensing and proviral hyper-integration (superinfection). Manipulates PML-NBs and modulates SUMOylation of host BLM protein thereby enhancing its DNA-end processing activity toward viral unintegrated linear DNA. Also inhibits RAD52-mediated homologous repair of viral cDNA, preventing the generation of dead-end circular forms of single copies of the long terminal repeat and permitting sustained nucleolytic attack. This chain is Protein Vpu, found in Pan troglodytes (Chimpanzee).